We begin with the raw amino-acid sequence, 231 residues long: NADH-ubiquinone oxidoreductase chain 4 (231 aa).

6 helical membrane passes run 1–21 (PIAGSMVLAAILLKLGGYGII), 34–54 (MFLPFLVLALWGAILANLTCL), 63–85 (IAYSSISHMGLVVAAIIIQTPWG), 89–111 (AMALMVAHGFTSSSLFCLANTTY), 128–148 (ILPMATTWWLLANLLNIATPP), and 156–176 (LLIMSALFNWCPTTIILLGLS).

Belongs to the complex I subunit 4 family.

It localises to the mitochondrion membrane. It catalyses the reaction a ubiquinone + NADH + 5 H(+)(in) = a ubiquinol + NAD(+) + 4 H(+)(out). In terms of biological role, core subunit of the mitochondrial membrane respiratory chain NADH dehydrogenase (Complex I) that is believed to belong to the minimal assembly required for catalysis. Complex I functions in the transfer of electrons from NADH to the respiratory chain. The immediate electron acceptor for the enzyme is believed to be ubiquinone. The protein is NADH-ubiquinone oxidoreductase chain 4 (MT-ND4) of Bothriechis lateralis (Side-striped palm pitviper).